The sequence spans 1357 residues: DNA-directed RNA polymerase subunit beta (1357 aa).

This sequence belongs to the RNA polymerase beta chain family. As to quaternary structure, the RNAP catalytic core consists of 2 alpha, 1 beta, 1 beta' and 1 omega subunit. When a sigma factor is associated with the core the holoenzyme is formed, which can initiate transcription.

The catalysed reaction is RNA(n) + a ribonucleoside 5'-triphosphate = RNA(n+1) + diphosphate. In terms of biological role, DNA-dependent RNA polymerase catalyzes the transcription of DNA into RNA using the four ribonucleoside triphosphates as substrates. This Pseudomonas putida (strain GB-1) protein is DNA-directed RNA polymerase subunit beta.